A 358-amino-acid chain; its full sequence is Ribosomal RNA-processing protein 8 (358 aa).

The disordered stretch occupies residues 1–81 (MKPFEVPPWE…PQDSSDDDYE (81 aa)). The span at 30 to 44 (AKKKPKKKKPKKKKA) shows a compositional bias: basic residues. Phosphoserine occurs at positions 75 and 76. S-adenosyl-L-methionine-binding residues include His-185, Gly-220, Asp-238, and Cys-267.

Belongs to the methyltransferase superfamily. RRP8 family.

It localises to the nucleus. The protein resides in the nucleolus. Probable methyltransferase required to silence rDNA. This chain is Ribosomal RNA-processing protein 8, found in Drosophila melanogaster (Fruit fly).